The chain runs to 380 residues: Cytochrome b (380 aa).

The next 4 helical transmembrane spans lie at 33–53 (FGSL…FLAM), 77–98 (WLIR…YLHI), 113–133 (WNIG…GYVL), and 178–198 (FFAF…IHLI). H83 and H97 together coordinate heme b. 2 residues coordinate heme b: H182 and H196. H201 provides a ligand contact to a ubiquinone. Helical transmembrane passes span 226–246 (YKDL…ALFS), 288–308 (LGGV…PVLH), 320–340 (FSQF…WIGG), and 347–367 (FIII…ILVP).

The protein belongs to the cytochrome b family. As to quaternary structure, the cytochrome bc1 complex contains 3 respiratory subunits (MT-CYB, CYC1 and UQCRFS1), 2 core proteins (UQCRC1 and UQCRC2) and probably 6 low-molecular weight proteins. Requires heme b as cofactor.

Its subcellular location is the mitochondrion inner membrane. In terms of biological role, component of the ubiquinol-cytochrome c reductase complex (complex III or cytochrome b-c1 complex) that is part of the mitochondrial respiratory chain. The b-c1 complex mediates electron transfer from ubiquinol to cytochrome c. Contributes to the generation of a proton gradient across the mitochondrial membrane that is then used for ATP synthesis. The polypeptide is Cytochrome b (mt-cyb) (Astronotus ocellatus (Oscar)).